The following is a 132-amino-acid chain: uncharacterized protein (132 aa).

The N-terminal stretch at Met1–Ala25 is a signal peptide.

This is an uncharacterized protein from Bacillus subtilis (strain 168).